Here is a 195-residue protein sequence, read N- to C-terminus: Peptidyl-tRNA hydrolase (195 aa).

Tyr17 serves as a coordination point for tRNA. Residue His22 is the Proton acceptor of the active site. TRNA-binding residues include Phe68, Asn70, and Asn116.

Belongs to the PTH family. As to quaternary structure, monomer.

It localises to the cytoplasm. It catalyses the reaction an N-acyl-L-alpha-aminoacyl-tRNA + H2O = an N-acyl-L-amino acid + a tRNA + H(+). Functionally, hydrolyzes ribosome-free peptidyl-tRNAs (with 1 or more amino acids incorporated), which drop off the ribosome during protein synthesis, or as a result of ribosome stalling. In terms of biological role, catalyzes the release of premature peptidyl moieties from peptidyl-tRNA molecules trapped in stalled 50S ribosomal subunits, and thus maintains levels of free tRNAs and 50S ribosomes. The protein is Peptidyl-tRNA hydrolase of Erwinia tasmaniensis (strain DSM 17950 / CFBP 7177 / CIP 109463 / NCPPB 4357 / Et1/99).